Reading from the N-terminus, the 906-residue chain is UPF0182 protein CA_C0010 (906 aa).

7 helical membrane-spanning segments follow: residues 7 to 29 (IVTIILFLLVIVGSFGKVTDFII), 47 to 69 (LAAILKLMIPIFIIIYTGLWFYY), 96 to 118 (VAIVIDVIASFFVAYFTSSVYWY), 153 to 175 (LYGVMLLFLIFMAVLTVILYIVL), 208 to 230 (FAIISGLIMFLVAVGYAIRSFNL), 250 to 272 (LVFYVIIIAAAIVSSVVIFTSII), and 279 to 301 (IFVSIVAILILIIGQSITAEIVQ). Positions 842–862 (NSSNNQSETRTETGGTSTDSS) are enriched in low complexity. Residues 842–875 (NSSNNQSETRTETGGTSTDSSNNKDKLKQAQDLY) form a disordered region.

Belongs to the UPF0182 family.

Its subcellular location is the cell membrane. The chain is UPF0182 protein CA_C0010 from Clostridium acetobutylicum (strain ATCC 824 / DSM 792 / JCM 1419 / IAM 19013 / LMG 5710 / NBRC 13948 / NRRL B-527 / VKM B-1787 / 2291 / W).